We begin with the raw amino-acid sequence, 248 residues long: tRNA pseudouridine synthase A (248 aa).

Asp-53 (nucleophile) is an active-site residue. A substrate-binding site is contributed by Tyr-111.

This sequence belongs to the tRNA pseudouridine synthase TruA family. In terms of assembly, homodimer.

It catalyses the reaction uridine(38/39/40) in tRNA = pseudouridine(38/39/40) in tRNA. Its function is as follows. Formation of pseudouridine at positions 38, 39 and 40 in the anticodon stem and loop of transfer RNAs. In Listeria monocytogenes serovar 1/2a (strain ATCC BAA-679 / EGD-e), this protein is tRNA pseudouridine synthase A.